A 220-amino-acid chain; its full sequence is Iron-sulfur cluster repair protein YtfE (220 aa).

This sequence belongs to the RIC family. YtfE subfamily. Homodimer.

It is found in the cytoplasm. Functionally, di-iron-containing protein involved in the repair of iron-sulfur clusters damaged by oxidative and nitrosative stress conditions. This chain is Iron-sulfur cluster repair protein YtfE, found in Shigella boydii serotype 4 (strain Sb227).